Consider the following 272-residue polypeptide: 3-methyl-2-oxobutanoate hydroxymethyltransferase (272 aa).

Residues Asp-42 and Asp-86 each coordinate Mg(2+). 3-methyl-2-oxobutanoate is bound by residues 42–43 (DS), Asp-86, and Lys-116. Glu-118 lines the Mg(2+) pocket. Glu-185 (proton acceptor) is an active-site residue.

It belongs to the PanB family. As to quaternary structure, homodecamer; pentamer of dimers. Mg(2+) is required as a cofactor.

It is found in the cytoplasm. It carries out the reaction 3-methyl-2-oxobutanoate + (6R)-5,10-methylene-5,6,7,8-tetrahydrofolate + H2O = 2-dehydropantoate + (6S)-5,6,7,8-tetrahydrofolate. It functions in the pathway cofactor biosynthesis; (R)-pantothenate biosynthesis; (R)-pantoate from 3-methyl-2-oxobutanoate: step 1/2. In terms of biological role, catalyzes the reversible reaction in which hydroxymethyl group from 5,10-methylenetetrahydrofolate is transferred onto alpha-ketoisovalerate to form ketopantoate. The sequence is that of 3-methyl-2-oxobutanoate hydroxymethyltransferase from Prochlorococcus marinus (strain MIT 9313).